Here is a 410-residue protein sequence, read N- to C-terminus: Argininosuccinate synthase (410 aa).

6 to 14 (AYSGGLDTS) provides a ligand contact to ATP. L-citrulline is bound at residue Tyr84. Position 114 (Gly114) interacts with ATP. L-aspartate contacts are provided by Thr116, Asn120, and Asp121. Asn120 is a binding site for L-citrulline. Arg124, Ser169, Ser178, Glu254, and Tyr266 together coordinate L-citrulline.

This sequence belongs to the argininosuccinate synthase family. Type 1 subfamily. Homotetramer.

Its subcellular location is the cytoplasm. It carries out the reaction L-citrulline + L-aspartate + ATP = 2-(N(omega)-L-arginino)succinate + AMP + diphosphate + H(+). It participates in amino-acid biosynthesis; L-arginine biosynthesis; L-arginine from L-ornithine and carbamoyl phosphate: step 2/3. This is Argininosuccinate synthase from Pyrococcus furiosus (strain ATCC 43587 / DSM 3638 / JCM 8422 / Vc1).